The sequence spans 156 residues: Cyclic pyranopterin monophosphate synthase (156 aa).

Substrate is bound by residues 75–77 and 111–112; these read LCH and ME. D126 is a catalytic residue.

The protein belongs to the MoaC family. As to quaternary structure, homohexamer; trimer of dimers.

It carries out the reaction (8S)-3',8-cyclo-7,8-dihydroguanosine 5'-triphosphate = cyclic pyranopterin phosphate + diphosphate. The protein operates within cofactor biosynthesis; molybdopterin biosynthesis. In terms of biological role, catalyzes the conversion of (8S)-3',8-cyclo-7,8-dihydroguanosine 5'-triphosphate to cyclic pyranopterin monophosphate (cPMP). This is Cyclic pyranopterin monophosphate synthase from Corynebacterium glutamicum (strain R).